The chain runs to 95 residues: Aspartyl/glutamyl-tRNA(Asn/Gln) amidotransferase subunit C (95 aa).

It belongs to the GatC family. In terms of assembly, heterotrimer of A, B and C subunits.

It carries out the reaction L-glutamyl-tRNA(Gln) + L-glutamine + ATP + H2O = L-glutaminyl-tRNA(Gln) + L-glutamate + ADP + phosphate + H(+). It catalyses the reaction L-aspartyl-tRNA(Asn) + L-glutamine + ATP + H2O = L-asparaginyl-tRNA(Asn) + L-glutamate + ADP + phosphate + 2 H(+). In terms of biological role, allows the formation of correctly charged Asn-tRNA(Asn) or Gln-tRNA(Gln) through the transamidation of misacylated Asp-tRNA(Asn) or Glu-tRNA(Gln) in organisms which lack either or both of asparaginyl-tRNA or glutaminyl-tRNA synthetases. The reaction takes place in the presence of glutamine and ATP through an activated phospho-Asp-tRNA(Asn) or phospho-Glu-tRNA(Gln). In Cytophaga hutchinsonii (strain ATCC 33406 / DSM 1761 / CIP 103989 / NBRC 15051 / NCIMB 9469 / D465), this protein is Aspartyl/glutamyl-tRNA(Asn/Gln) amidotransferase subunit C.